The primary structure comprises 375 residues: Nucleosome assembly protein 1-like 4 (375 aa).

The segment at 1-31 (MADHSFSDGVPSDSVEAAKNASNTEKLTDQV) is disordered. Ala-2 is subject to N-acetylalanine. Ser-5, Ser-7, and Ser-12 each carry phosphoserine. The segment covering 20–31 (NASNTEKLTDQV) has biased composition (polar residues). Thr-51 carries the post-translational modification Phosphothreonine. Ser-53 and Ser-54 each carry phosphoserine. The residue at position 58 (Thr-58) is a Phosphothreonine. Lys-105 bears the N6-acetyllysine mark. The interval 116–137 (PTDAESEWHSENEEEEKLAGDM) is disordered. Basic and acidic residues predominate over residues 121 to 137 (SEWHSENEEEEKLAGDM). Ser-125 carries the post-translational modification Phosphoserine. An N6-acetyllysine modification is found at Lys-146. The short motif at 265 to 271 (IKKKQKH) is the Nuclear localization signal element. Position 304 is a phosphoserine (Ser-304). Residues 339–375 (AIEDDDNFEEGEEGEEEELEGDEEGEDEDDAEINPKV) form a disordered region.

It belongs to the nucleosome assembly protein (NAP) family. As to quaternary structure, interacts with core (H2A, CD2APH2B, H3, H4) and linker (H1) histones. (Microbial infection) Interacts with Chikungunya virus non-structural protein 3 (via C-terminus). Phosphorylated at the G0/G1 boundary but it is not phosphorylated in S-phase. Phosphorylated protein remains in the cytoplasm in a complex with histones during the G0/G1 transition, whereas dephosphorylation triggers its transport into the nucleus at the G1/S-boundary. Post-translationally, polyglutamylated by TTLL4, a modification that occurs exclusively on glutamate residues and results in polyglutamate chains on the gamma-carboxyl group. Some residues may also be monoglycylated but not polyglycylated due to the absence of functional TTLL10 in human. Ubiquitous. Biallelically expressed in fetal and adult tissues. Highest levels in testis.

It localises to the nucleus. The protein resides in the cytoplasm. Functionally, acts as a histone chaperone in nucleosome assembly. The sequence is that of Nucleosome assembly protein 1-like 4 from Homo sapiens (Human).